A 480-amino-acid polypeptide reads, in one-letter code: Glutamate--tRNA ligase (480 aa).

The 'HIGH' region motif lies at 8 to 18 (PSPTGPLHIGG). The 'KMSKS' region motif lies at 249–253 (KMSKR). K252 serves as a coordination point for ATP.

This sequence belongs to the class-I aminoacyl-tRNA synthetase family. Glutamate--tRNA ligase type 1 subfamily. As to quaternary structure, monomer.

Its subcellular location is the cytoplasm. It carries out the reaction tRNA(Glu) + L-glutamate + ATP = L-glutamyl-tRNA(Glu) + AMP + diphosphate. In terms of biological role, catalyzes the attachment of glutamate to tRNA(Glu) in a two-step reaction: glutamate is first activated by ATP to form Glu-AMP and then transferred to the acceptor end of tRNA(Glu). This chain is Glutamate--tRNA ligase, found in Carboxydothermus hydrogenoformans (strain ATCC BAA-161 / DSM 6008 / Z-2901).